Here is a 147-residue protein sequence, read N- to C-terminus: Cytochrome c oxidase subunit 3 (147 aa).

Transmembrane regions (helical) follow at residues 13–33 (FQIP…VTWA), 48–68 (GLFI…YEYF), 83–103 (FFMA…FLLI), and 125–145 (AWYW…IYWW).

Belongs to the cytochrome c oxidase subunit 3 family. In terms of assembly, component of the cytochrome c oxidase (complex IV, CIV), a multisubunit enzyme composed of a catalytic core of 3 subunits and several supernumerary subunits. The complex exists as a monomer or a dimer and forms supercomplexes (SCs) in the inner mitochondrial membrane with ubiquinol-cytochrome c oxidoreductase (cytochrome b-c1 complex, complex III, CIII).

It is found in the mitochondrion inner membrane. The catalysed reaction is 4 Fe(II)-[cytochrome c] + O2 + 8 H(+)(in) = 4 Fe(III)-[cytochrome c] + 2 H2O + 4 H(+)(out). Component of the cytochrome c oxidase, the last enzyme in the mitochondrial electron transport chain which drives oxidative phosphorylation. The respiratory chain contains 3 multisubunit complexes succinate dehydrogenase (complex II, CII), ubiquinol-cytochrome c oxidoreductase (cytochrome b-c1 complex, complex III, CIII) and cytochrome c oxidase (complex IV, CIV), that cooperate to transfer electrons derived from NADH and succinate to molecular oxygen, creating an electrochemical gradient over the inner membrane that drives transmembrane transport and the ATP synthase. Cytochrome c oxidase is the component of the respiratory chain that catalyzes the reduction of oxygen to water. Electrons originating from reduced cytochrome c in the intermembrane space (IMS) are transferred via the dinuclear copper A center (CU(A)) of subunit 2 and heme A of subunit 1 to the active site in subunit 1, a binuclear center (BNC) formed by heme A3 and copper B (CU(B)). The BNC reduces molecular oxygen to 2 water molecules using 4 electrons from cytochrome c in the IMS and 4 protons from the mitochondrial matrix. The chain is Cytochrome c oxidase subunit 3 (COIII) from Spodoptera frugiperda (Fall armyworm).